Here is a 944-residue protein sequence, read N- to C-terminus: UvrABC system protein A (944 aa).

The region spanning 1 to 242 (MSKVDFLHIK…GKGIVKVENV (242 aa)) is the ABC transporter 1 domain. 34 to 41 (GLSGSGKS) contributes to the ATP binding site. The segment at 256-283 (CPKGDFEMPKIETRLFSFNSPYGMCQNC) adopts a C4-type; degenerate zinc-finger fold. 2 ABC transporter domains span residues 359-597 (EEID…KYLS) and 610-935 (SGSG…EKSY). ATP is bound at residue 643–650 (GVSGSGKS). The C4-type zinc finger occupies 744–770 (CEKCSGDGSIKIEMFFLPNVYITCDHC).

Belongs to the ABC transporter superfamily. UvrA family. Forms a heterotetramer with UvrB during the search for lesions.

It localises to the cytoplasm. Functionally, the UvrABC repair system catalyzes the recognition and processing of DNA lesions. UvrA is an ATPase and a DNA-binding protein. A damage recognition complex composed of 2 UvrA and 2 UvrB subunits scans DNA for abnormalities. When the presence of a lesion has been verified by UvrB, the UvrA molecules dissociate. In Mycoplasmopsis pulmonis (strain UAB CTIP) (Mycoplasma pulmonis), this protein is UvrABC system protein A.